Here is an 86-residue protein sequence, read N- to C-terminus: UPF0457 protein SSP0714 (86 aa).

It belongs to the UPF0457 family.

The protein is UPF0457 protein SSP0714 of Staphylococcus saprophyticus subsp. saprophyticus (strain ATCC 15305 / DSM 20229 / NCIMB 8711 / NCTC 7292 / S-41).